The following is a 711-amino-acid chain: MVATVTDEQSAARELVRGWARTAASGAAATAAVRDMEYGFEEGNADAWRPVFAGLAGLGLFGVAVPEDCGGAGGSIEDLCAMVDEAARALVPGPVATTAVATLVVSDPKLRSALASGERFAGVAIDGGVQVDPKTSTASGTVGRVLGGAPGGVVLLPADGNWLLVDTACDEVVVEPLRATDFSLPLARMVLTSAPVTVLEVSGERVEDLAATVLAAEAAGVARWTLDTAVAYAKVREQFGKPIGSFQAVKHLCAQMLCRAEQADVAAADAARAAADSDGTQLSIAAAVAASIGIDAAKANAKDCIQVLGGIGCTWEHDAHLYLRRAHGIGGFLGGSGRWLRRVTALTQAGVRRRLGVDLAEVAGLRPEIAAAVAEVAALPEEKRQVALADTGLLAPHWPAPYGRGASPAEQLLIDQELAAAKVERPDLVIGWWAAPTILEHGTPEQIERFVPATMRGEFLWCQLFSEPGAGSDLASLRTKAVRADGGWLLTGQKVWTSAAHKARWGVCLARTDPDAPKHKGITYFLVDMTTPGIEIRPLREITGDSLFNEVFLDNVFVPDEMVVGAVNDGWRLARTTLANERVAMATGTALGNPMEELLKVLGDMELDVAQQDRLGRLILLAQAGALLDRRIAELAVGGQDPGAQSSVRKLIGVRYRQALAEYLMEVSDGGGLVENRAVYDFLNTRCLTIAGGTEQILLTVAAERLLGLPR.

Belongs to the acyl-CoA dehydrogenase family. In terms of assembly, homodimer. The cofactor is FAD.

The enzyme catalyses 3-oxochol-4-en-24-oyl-CoA + A = (22E)-3-oxochola-4,22-dien-24-oyl-CoA + AH2. It carries out the reaction 3beta-hydroxy-chol-5-ene-24-oyl-CoA + A = 3beta-hydroxy-chol-5,22-dien-24-oyl-CoA + AH2. It functions in the pathway steroid metabolism; cholesterol degradation. Functionally, involved in the second cycle of side chain dehydrogenation in the beta-oxidation of cholesterol catabolism. It contributes partly to the virulence by increasing the efficiency of beta-oxidation. Catalyzes the dehydrogenation of the five-carbon steroid side chain of 3-oxo-chol-4-en-24-oyl-CoA (3-OCO-CoA) to yield 3-oxochol-4,22-dien-24-oyl-CoA. Can also use 3beta-hydroxy-chol-5-ene-24-oyl-CoA, and shows weak activity with cholyl-CoA and deoxycholyl-CoA. The chain is Acyl-CoA dehydrogenase FadE34 (fadE34) from Mycobacterium tuberculosis (strain ATCC 25618 / H37Rv).